Consider the following 480-residue polypeptide: Glycogen synthase (480 aa).

Position 15 (lysine 15) interacts with ADP-alpha-D-glucose.

The protein belongs to the glycosyltransferase 1 family. Bacterial/plant glycogen synthase subfamily.

The enzyme catalyses [(1-&gt;4)-alpha-D-glucosyl](n) + ADP-alpha-D-glucose = [(1-&gt;4)-alpha-D-glucosyl](n+1) + ADP + H(+). The protein operates within glycan biosynthesis; glycogen biosynthesis. Functionally, synthesizes alpha-1,4-glucan chains using ADP-glucose. The chain is Glycogen synthase from Rhizobium tropici.